The following is a 233-amino-acid chain: MGKTTKRFQELLKKVEENKIYNLDEAITTIKTLASAKFDETVEIALKLNVDPRHADQMVRGSVVLPAGTGKTVRVAVIAKDAKADEAKAAGADIVGSDELVEDIQKGIMNFDVLIATPNLMGLVGKVGRILGPKGLMPNPKTGTVTMDVAQAVNNAKSGQVNFRVDKQGNIHAGLGKVSFSKEQLNENISTFIKAINKHKPSASKGRYVKNASLSLTMSPSIALDTQEVMDLK.

This sequence belongs to the universal ribosomal protein uL1 family. Part of the 50S ribosomal subunit.

Functionally, binds directly to 23S rRNA. The L1 stalk is quite mobile in the ribosome, and is involved in E site tRNA release. Its function is as follows. Protein L1 is also a translational repressor protein, it controls the translation of the L11 operon by binding to its mRNA. The chain is Large ribosomal subunit protein uL1 from Campylobacter curvus (strain 525.92).